The primary structure comprises 358 residues: Peptide chain release factor 1 (358 aa).

Glutamine 233 is modified (N5-methylglutamine).

It belongs to the prokaryotic/mitochondrial release factor family. Methylated by PrmC. Methylation increases the termination efficiency of RF1.

It localises to the cytoplasm. Functionally, peptide chain release factor 1 directs the termination of translation in response to the peptide chain termination codons UAG and UAA. The protein is Peptide chain release factor 1 of Listeria monocytogenes serovar 1/2a (strain ATCC BAA-679 / EGD-e).